The chain runs to 506 residues: Dolichyl pyrophosphate Glc1Man9GlcNAc2 alpha-1,3-glucosyltransferase (506 aa).

12 helical membrane-spanning segments follow: residues 10–30 (RLLLWFFAVATAVKLLLIPSS), 101–121 (VIYFQRISVIVSDLCLLYGVY), 133–153 (NLICALVIWSPGLLIVDHIHF), 176–196 (LLGGFLFAVLLCFKHLFAVTA), 219–239 (LVTIGAVVVAVFAAAYGPFIY), 261–281 (YWAPNFWVFYIILDKGLAVLL), 305–325 (PFAVLPQITPLTTFAMVLLAI), 339–359 (GLVARWVAYAYTCGFLFGWHV), 384–401 (HYFLVSIVSCYSLYPLLY), 406–426 (YPIKVLLLLLHSVVMWLGFAA), 454–474 (YLMGLIIVEIVSQFLHPYFLG), and 479–499 (FLPLMLISTYCTVGIMYSWIW).

The protein belongs to the ALG6/ALG8 glucosyltransferase family.

Its subcellular location is the endoplasmic reticulum membrane. The enzyme catalyses an alpha-D-Glc-(1-&gt;3)-alpha-D-Man-(1-&gt;2)-alpha-D-Man-(1-&gt;2)-alpha-D-Man-(1-&gt;3)-[alpha-D-Man-(1-&gt;2)-alpha-D-Man-(1-&gt;3)-[alpha-D-Man-(1-&gt;2)-alpha-D-Man-(1-&gt;6)]-alpha-D-Man-(1-&gt;6)]-beta-D-Man-(1-&gt;4)-beta-D-GlcNAc-(1-&gt;4)-alpha-D-GlcNAc-diphospho-di-trans,poly-cis-dolichol + a di-trans,poly-cis-dolichyl beta-D-glucosyl phosphate = an alpha-D-Glc-(1-&gt;3)-alpha-D-Glc-(1-&gt;3)-alpha-D-Man-(1-&gt;2)-alpha-D-Man-(1-&gt;2)-alpha-D-Man-(1-&gt;3)-[alpha-D-Man-(1-&gt;2)-alpha-D-Man-(1-&gt;3)-[alpha-D-Man-(1-&gt;2)-alpha-D-Man-(1-&gt;6)]-alpha-D-Man-(1-&gt;6)]-beta-D-Man-(1-&gt;4)-beta-D-GlcNAc-(1-&gt;4)-alpha-D-GlcNAc-diphospho-di-trans,poly-cis-dolichol + a di-trans,poly-cis-dolichyl phosphate + H(+). The protein operates within protein modification; protein glycosylation. Dolichyl pyrophosphate Glc1Man9GlcNAc2 alpha-1,3-glucosyltransferase that operates in the biosynthetic pathway of dolichol-linked oligosaccharides, the glycan precursors employed in protein asparagine (N)-glycosylation. The assembly of dolichol-linked oligosaccharides begins on the cytosolic side of the endoplasmic reticulum membrane and finishes in its lumen. The sequential addition of sugars to dolichol pyrophosphate produces dolichol-linked oligosaccharides containing fourteen sugars, including two GlcNAcs, nine mannoses and three glucoses. Once assembled, the oligosaccharide is transferred from the lipid to nascent proteins by oligosaccharyltransferases. In the lumen of the endoplasmic reticulum, adds the second glucose residue from dolichyl phosphate glucose (Dol-P-Glc) onto the lipid-linked oligosaccharide intermediate Glc(1)Man(9)GlcNAc(2)-PP-Dol to produce Glc(2)Man(9)GlcNAc(2)-PP-Dol. The chain is Dolichyl pyrophosphate Glc1Man9GlcNAc2 alpha-1,3-glucosyltransferase from Arabidopsis thaliana (Mouse-ear cress).